A 213-amino-acid chain; its full sequence is Large ribosomal subunit protein uL3 (213 aa).

The tract at residues 131–168 (GPMSHGSKNHRLPGSTGAGTTPGRVYPGKRMAGRSGND) is disordered.

Belongs to the universal ribosomal protein uL3 family. In terms of assembly, part of the 50S ribosomal subunit. Forms a cluster with proteins L14 and L19.

Functionally, one of the primary rRNA binding proteins, it binds directly near the 3'-end of the 23S rRNA, where it nucleates assembly of the 50S subunit. This is Large ribosomal subunit protein uL3 from Synechococcus elongatus (strain ATCC 33912 / PCC 7942 / FACHB-805) (Anacystis nidulans R2).